A 360-amino-acid polypeptide reads, in one-letter code: Meiosis-inducing protein 1 (360 aa).

The tract at residues 102–135 (SKETKTTKDCTMATGPERGKKSSESTRSSSLSSL) is disordered. Low complexity predominate over residues 126 to 135 (STRSSSLSSL).

Interacts with UME6.

The protein localises to the nucleus. Functionally, transcription factor required for sporulation and for early sporulation-specific genes expression. Positive regulator of SME1/IME2 expression. Directly activates expression of SLZ1 during meiosis. This is Meiosis-inducing protein 1 (IME1) from Saccharomyces cerevisiae (strain ATCC 204508 / S288c) (Baker's yeast).